The sequence spans 299 residues: Putative hydrolase YtaP (299 aa).

It belongs to the dienelactone hydrolase family.

The chain is Putative hydrolase YtaP (ytaP) from Bacillus subtilis (strain 168).